The chain runs to 179 residues: ATP synthase subunit delta (179 aa).

The protein belongs to the ATPase delta chain family. As to quaternary structure, F-type ATPases have 2 components, F(1) - the catalytic core - and F(0) - the membrane proton channel. F(1) has five subunits: alpha(3), beta(3), gamma(1), delta(1), epsilon(1). F(0) has three main subunits: a(1), b(2) and c(10-14). The alpha and beta chains form an alternating ring which encloses part of the gamma chain. F(1) is attached to F(0) by a central stalk formed by the gamma and epsilon chains, while a peripheral stalk is formed by the delta and b chains.

The protein resides in the cell membrane. In terms of biological role, f(1)F(0) ATP synthase produces ATP from ADP in the presence of a proton or sodium gradient. F-type ATPases consist of two structural domains, F(1) containing the extramembraneous catalytic core and F(0) containing the membrane proton channel, linked together by a central stalk and a peripheral stalk. During catalysis, ATP synthesis in the catalytic domain of F(1) is coupled via a rotary mechanism of the central stalk subunits to proton translocation. This protein is part of the stalk that links CF(0) to CF(1). It either transmits conformational changes from CF(0) to CF(1) or is implicated in proton conduction. In Clostridium botulinum (strain 657 / Type Ba4), this protein is ATP synthase subunit delta.